A 178-amino-acid chain; its full sequence is Large ribosomal subunit protein uL6 (178 aa).

Belongs to the universal ribosomal protein uL6 family. As to quaternary structure, part of the 50S ribosomal subunit.

This protein binds to the 23S rRNA, and is important in its secondary structure. It is located near the subunit interface in the base of the L7/L12 stalk, and near the tRNA binding site of the peptidyltransferase center. The chain is Large ribosomal subunit protein uL6 from Sulfurovum sp. (strain NBC37-1).